A 125-amino-acid chain; its full sequence is Small ribosomal subunit protein bS6 (125 aa).

The tract at residues 96-125 is disordered; sequence VTEASPMKAAKEERKPLAEVENNDFEDAEE. Basic and acidic residues predominate over residues 104-113; that stretch reads AAKEERKPLA. Residues 116–125 are compositionally biased toward acidic residues; it reads ENNDFEDAEE.

Belongs to the bacterial ribosomal protein bS6 family.

Functionally, binds together with bS18 to 16S ribosomal RNA. This chain is Small ribosomal subunit protein bS6, found in Haemophilus influenzae (strain 86-028NP).